The chain runs to 133 residues: Small ribosomal subunit protein uS9 (133 aa).

Residues 111–133 (PRRSESKKFGGPGARARKQKSYR) are disordered.

Belongs to the universal ribosomal protein uS9 family.

In Methanosphaera stadtmanae (strain ATCC 43021 / DSM 3091 / JCM 11832 / MCB-3), this protein is Small ribosomal subunit protein uS9.